A 274-amino-acid polypeptide reads, in one-letter code: Nitrogenase iron protein (274 aa).

Position 8–15 (8–15) interacts with ATP; the sequence is GKGGIGKS. Cys94 is a binding site for [4Fe-4S] cluster. An ADP-ribosylarginine; by dinitrogenase reductase ADP-ribosyltransferase modification is found at Arg97. Cys131 is a binding site for [4Fe-4S] cluster.

Belongs to the NifH/BchL/ChlL family. In terms of assembly, homodimer. Requires [4Fe-4S] cluster as cofactor. In terms of processing, the reversible ADP-ribosylation of Arg-97 inactivates the nitrogenase reductase and regulates nitrogenase activity.

It carries out the reaction N2 + 8 reduced [2Fe-2S]-[ferredoxin] + 16 ATP + 16 H2O = H2 + 8 oxidized [2Fe-2S]-[ferredoxin] + 2 NH4(+) + 16 ADP + 16 phosphate + 6 H(+). The key enzymatic reactions in nitrogen fixation are catalyzed by the nitrogenase complex, which has 2 components: the iron protein and the molybdenum-iron protein. This Chlorobium phaeovibrioides (strain DSM 265 / 1930) (Prosthecochloris vibrioformis (strain DSM 265)) protein is Nitrogenase iron protein.